An 82-amino-acid chain; its full sequence is ATP synthase subunit c, chloroplastic (82 aa).

2 helical membrane-spanning segments follow: residues 4–24 (IISA…AIGP) and 57–77 (LAFM…LLFA).

The protein belongs to the ATPase C chain family. In terms of assembly, F-type ATPases have 2 components, F(1) - the catalytic core - and F(0) - the membrane proton channel. F(1) has five subunits: alpha(3), beta(3), gamma(1), delta(1), epsilon(1). F(0) has four main subunits: a(1), b(1), b'(1) and c(10-14). The alpha and beta chains form an alternating ring which encloses part of the gamma chain. F(1) is attached to F(0) by a central stalk formed by the gamma and epsilon chains, while a peripheral stalk is formed by the delta, b and b' chains.

It is found in the plastid. The protein resides in the chloroplast thylakoid membrane. Its function is as follows. F(1)F(0) ATP synthase produces ATP from ADP in the presence of a proton or sodium gradient. F-type ATPases consist of two structural domains, F(1) containing the extramembraneous catalytic core and F(0) containing the membrane proton channel, linked together by a central stalk and a peripheral stalk. During catalysis, ATP synthesis in the catalytic domain of F(1) is coupled via a rotary mechanism of the central stalk subunits to proton translocation. Functionally, key component of the F(0) channel; it plays a direct role in translocation across the membrane. A homomeric c-ring of between 10-14 subunits forms the central stalk rotor element with the F(1) delta and epsilon subunits. In Trieres chinensis (Marine centric diatom), this protein is ATP synthase subunit c, chloroplastic.